We begin with the raw amino-acid sequence, 81 residues long: Photosystem I iron-sulfur center (81 aa).

2 consecutive 4Fe-4S ferredoxin-type domains span residues 2-31 (SHTVKIYDTCIGCTQCVRACPTDVLEMVPW) and 37-68 (GQIASSPRVEDCVGCKRCETACPTDFLSVRVY). Positions 11, 14, 17, 21, 48, 51, 54, and 58 each coordinate [4Fe-4S] cluster.

In terms of assembly, the eukaryotic PSI reaction center is composed of at least 11 subunits. The cofactor is [4Fe-4S] cluster.

It is found in the plastid. Its subcellular location is the chloroplast thylakoid membrane. The enzyme catalyses reduced [plastocyanin] + hnu + oxidized [2Fe-2S]-[ferredoxin] = oxidized [plastocyanin] + reduced [2Fe-2S]-[ferredoxin]. Its function is as follows. Apoprotein for the two 4Fe-4S centers FA and FB of photosystem I (PSI); essential for photochemical activity. FB is the terminal electron acceptor of PSI, donating electrons to ferredoxin. The C-terminus interacts with PsaA/B/D and helps assemble the protein into the PSI complex. Required for binding of PsaD and PsaE to PSI. PSI is a plastocyanin/cytochrome c6-ferredoxin oxidoreductase, converting photonic excitation into a charge separation, which transfers an electron from the donor P700 chlorophyll pair to the spectroscopically characterized acceptors A0, A1, FX, FA and FB in turn. This is Photosystem I iron-sulfur center from Thalassiosira pseudonana (Marine diatom).